We begin with the raw amino-acid sequence, 312 residues long: NAD(P)(+)--arginine ADP-ribosyltransferase 2 (312 aa).

A signal peptide spans 1-20 (MELLALRWVLLAGTLLSTSA). A propeptide spanning residues 21–31 (ASSALQEGDLG) is cleaved from the precursor. Disulfide bonds link cysteine 51/cysteine 260 and cysteine 159/cysteine 208. The TR mART core domain occupies 71-256 (YAYAVGWRKA…IYLRSKGKMS (186 aa)). Positions 108, 164, and 183 each coordinate NAD(+). Residue arginine 164 is part of the active site. The active site involves serine 186. Position 217 (serine 217) interacts with NAD(+). Glutamate 224 is a catalytic residue. Residues 267-312 (GGQWGRGHQEVGLGLSPGLALPVLPCSNCSCWGSGHRAGDPIPAAV) constitute a propeptide that is removed on maturation.

The protein belongs to the Arg-specific ADP-ribosyltransferase family.

The protein resides in the secreted. The protein localises to the extracellular space. It catalyses the reaction L-arginyl-[protein] + NAD(+) = N(omega)-(ADP-D-ribosyl)-L-arginyl-[protein] + nicotinamide + H(+). The sequence is that of NAD(P)(+)--arginine ADP-ribosyltransferase 2 from Gallus gallus (Chicken).